We begin with the raw amino-acid sequence, 67 residues long: Sec-independent protein translocase protein TatA (67 aa).

The helical transmembrane segment at 1–21 (MFGLGGQELVLILLIVLLLFG) threads the bilayer.

Belongs to the TatA/E family. Forms a complex with TatC.

It is found in the cell inner membrane. Its function is as follows. Part of the twin-arginine translocation (Tat) system that transports large folded proteins containing a characteristic twin-arginine motif in their signal peptide across membranes. TatA could form the protein-conducting channel of the Tat system. This is Sec-independent protein translocase protein TatA from Chlorobaculum tepidum (strain ATCC 49652 / DSM 12025 / NBRC 103806 / TLS) (Chlorobium tepidum).